The following is a 233-amino-acid chain: Mediator of RNA polymerase II transcription subunit 8 (233 aa).

The tract at residues 204 to 233 (RGEVDRGSSSQEGLSTNNEQSGDKDIIMAD) is disordered. Positions 210-223 (GSSSQEGLSTNNEQ) are enriched in polar residues. The span at 224–233 (SGDKDIIMAD) shows a compositional bias: basic and acidic residues.

This sequence belongs to the Mediator complex subunit 8 family. As to quaternary structure, component of the Mediator complex.

The protein resides in the nucleus. Component of the Mediator complex, a coactivator involved in the regulated transcription of nearly all RNA polymerase II-dependent genes. Mediator functions as a bridge to convey information from gene-specific regulatory proteins to the basal RNA polymerase II transcription machinery. Mediator is recruited to promoters by direct interactions with regulatory proteins and serves as a scaffold for the assembly of a functional preinitiation complex with RNA polymerase II and the general transcription factors. This Candida glabrata (strain ATCC 2001 / BCRC 20586 / JCM 3761 / NBRC 0622 / NRRL Y-65 / CBS 138) (Yeast) protein is Mediator of RNA polymerase II transcription subunit 8 (MED8).